The primary structure comprises 242 residues: Probable transcriptional regulatory protein LBA0733 (242 aa).

A disordered region spans residues 1–22 (MSGHSKWHNIQGRKNAQDAKRG).

It belongs to the TACO1 family.

Its subcellular location is the cytoplasm. In Lactobacillus acidophilus (strain ATCC 700396 / NCK56 / N2 / NCFM), this protein is Probable transcriptional regulatory protein LBA0733.